The chain runs to 151 residues: Putative phosphatidylglycerol/phosphatidylinositol transfer protein 3 (151 aa).

A signal peptide spans 1–26 (MKYSQNQIVYVIFFFIILIVVKPIES).

It belongs to the NPC2 family. In terms of assembly, monomer.

Catalyzes the intermembrane transfer of phosphatidylglycerol and phosphatidylinositol. The chain is Putative phosphatidylglycerol/phosphatidylinositol transfer protein 3 from Dictyostelium discoideum (Social amoeba).